Here is a 404-residue protein sequence, read N- to C-terminus: ORC1-type DNA replication protein 2 (404 aa).

ATP is bound by residues threonine 64 to serine 68, tyrosine 205, and arginine 217.

It belongs to the CDC6/cdc18 family. Interacts with MCM.

Involved in regulation of DNA replication. Stimulates the helicase activity of MCM via stimulation of its ATPase activity. Binding to MCM may result in conformational changes in MCM, leading to catalytic ATP hydrolysis by the helicase. Directly stimulates MCM movement along single-stranded and double-stranded DNA. Does not bind DNA. This chain is ORC1-type DNA replication protein 2 (cdc6-2), found in Thermoplasma acidophilum (strain ATCC 25905 / DSM 1728 / JCM 9062 / NBRC 15155 / AMRC-C165).